The following is a 340-amino-acid chain: Ribosomal RNA large subunit methyltransferase F (340 aa).

Belongs to the methyltransferase superfamily. METTL16/RlmF family.

The protein resides in the cytoplasm. The catalysed reaction is adenosine(1618) in 23S rRNA + S-adenosyl-L-methionine = N(6)-methyladenosine(1618) in 23S rRNA + S-adenosyl-L-homocysteine + H(+). In terms of biological role, specifically methylates the adenine in position 1618 of 23S rRNA. This Dechloromonas aromatica (strain RCB) protein is Ribosomal RNA large subunit methyltransferase F.